The primary structure comprises 140 residues: Nucleoside diphosphate kinase (140 aa).

Positions 11, 59, 87, 93, 104, and 114 each coordinate ATP. Histidine 117 (pros-phosphohistidine intermediate) is an active-site residue.

The protein belongs to the NDK family. Homotetramer. Mg(2+) serves as cofactor.

It localises to the cytoplasm. It carries out the reaction a 2'-deoxyribonucleoside 5'-diphosphate + ATP = a 2'-deoxyribonucleoside 5'-triphosphate + ADP. It catalyses the reaction a ribonucleoside 5'-diphosphate + ATP = a ribonucleoside 5'-triphosphate + ADP. Major role in the synthesis of nucleoside triphosphates other than ATP. The ATP gamma phosphate is transferred to the NDP beta phosphate via a ping-pong mechanism, using a phosphorylated active-site intermediate. The polypeptide is Nucleoside diphosphate kinase (Persephonella marina (strain DSM 14350 / EX-H1)).